The following is a 461-amino-acid chain: D-phenylhydantoinase (461 aa).

3 residues coordinate a divalent metal cation: histidine 59, histidine 61, and lysine 151. N6-carboxylysine is present on lysine 151. Tyrosine 156 provides a ligand contact to substrate. Residues histidine 182 and histidine 239 each coordinate a divalent metal cation. Serine 286 serves as a coordination point for substrate. Aspartate 313 provides a ligand contact to a divalent metal cation. Asparagine 335 serves as a coordination point for substrate.

This sequence belongs to the metallo-dependent hydrolases superfamily. Hydantoinase/dihydropyrimidinase family. In terms of assembly, homotetramer. A divalent metal cation is required as a cofactor. Carboxylation allows a single lysine to coordinate two divalent metal cations.

It carries out the reaction D-5-phenylhydantoin + H2O = N-carbamoyl-D-phenylglycine + H(+). Functionally, catalyzes the stereospecific hydrolysis of the cyclic amide bond of D-hydantoin derivatives with an aromatic side chains at the 5'-position. Has no activity on dihydropyrimidines. The physiological function is unknown. This is D-phenylhydantoinase from Escherichia coli O81 (strain ED1a).